The sequence spans 53 residues: Cytochrome c oxidase subunit 7e (53 aa).

In terms of assembly, slime mold cytochrome c oxidase consists of at least seven different polypeptides species, subunits I, II, III, IV, V, VI, and VIIe/s in order of MW.

It is found in the mitochondrion inner membrane. The enzyme catalyses 4 Fe(II)-[cytochrome c] + O2 + 8 H(+)(in) = 4 Fe(III)-[cytochrome c] + 2 H2O + 4 H(+)(out). Its function is as follows. This protein is one of the nuclear-coded polypeptide chains of cytochrome c oxidase, the terminal oxidase in mitochondrial electron transport. This is Cytochrome c oxidase subunit 7e (cxgE) from Dictyostelium discoideum (Social amoeba).